A 203-amino-acid polypeptide reads, in one-letter code: MAEGQVLVLDGRSHLLGRLAAIVAKQVLLGRKVVVVRCEGINISGNFYRNKLKYLAFLRKRMNTNPSRGPYHFRAPSRIFWRTVRGMLPHKTKRGQAALERLKVLDGIPPPYDKKKRMVVPAALKVVRLKPTRKFAYLGRLAHEVGWKYQAVTATLEEKRKEKAKIHYRKKKQLLRLRKQAEKNVEKKICKFTEVLKTNGLLV.

Ala2 is modified (N-acetylalanine). Arg59 bears the Citrulline mark. Ser77 is subject to Phosphoserine. Arg140 is modified (citrulline). An N6-acetyllysine modification is found at Lys191.

Belongs to the universal ribosomal protein uL13 family. Component of the 60S ribosome. Component of the GAIT complex. Interacts with EIF4G1. In terms of processing, phosphorylation at Ser-77 upon interferon-gamma treatment in macrophages involves a DAPK1-DAPK3 kinase cascade and is causing release from the ribosome, association with the GAIT complex and subsequent involvement in transcript-selective translation inhibition. Citrullinated by PADI4.

Its subcellular location is the cytoplasm. Its function is as follows. Associated with ribosomes but is not required for canonical ribosome function and has extra-ribosomal functions. Component of the GAIT (gamma interferon-activated inhibitor of translation) complex which mediates interferon-gamma-induced transcript-selective translation inhibition in inflammation processes. Upon interferon-gamma activation and subsequent phosphorylation dissociates from the ribosome and assembles into the GAIT complex which binds to stem loop-containing GAIT elements in the 3'-UTR of diverse inflammatory mRNAs (such as ceruplasmin) and suppresses their translation. In the GAIT complex interacts with m7G cap-bound eIF4G at or near the eIF3-binding site and blocks the recruitment of the 43S ribosomal complex. Involved in methylation of rRNA. The chain is Large ribosomal subunit protein uL13 (Rpl13a) from Rattus norvegicus (Rat).